The following is a 177-amino-acid chain: Glutathione peroxidase homolog (177 aa).

Cys35 is an active-site residue.

Belongs to the glutathione peroxidase family.

In terms of biological role, important in the cellular metabolism or defense processes particular to this pathogen. This Neisseria meningitidis serogroup A / serotype 4A (strain DSM 15465 / Z2491) protein is Glutathione peroxidase homolog (gpxA).